A 237-amino-acid chain; its full sequence is Urease accessory protein UreF (237 aa).

This sequence belongs to the UreF family. In terms of assembly, ureD, UreF and UreG form a complex that acts as a GTP-hydrolysis-dependent molecular chaperone, activating the urease apoprotein by helping to assemble the nickel containing metallocenter of UreC. The UreE protein probably delivers the nickel.

It is found in the cytoplasm. Required for maturation of urease via the functional incorporation of the urease nickel metallocenter. The sequence is that of Urease accessory protein UreF from Streptococcus salivarius (strain 57.I).